Reading from the N-terminus, the 365-residue chain is MDNYEFSELLKTLKNKVGNIASIIKPENIQTRLKEIEELENSPSFWSDVKQAGVIGKEKTKITNLLKNYENAFNALNDASELFDLANSENDTETLEALFNDAPKLEDTITSLEISMLLSGENDGKNAIVSIHPGAGGTESNDWASILYRMYLRFCEREGFKVETLDFQEGEEAGLKDVSFLVKGENAYGYLKAENGIHRLVRTSPFDSAGRRHTSFSSVMVSPELDDDIEIEIEEKDIRIDYYRASGAGGQHVNKTESAVRITHFPTGIVVQCQNDRSQHKNKATAFKMLKSRLYELELMKQQDSANTGEKSEIGWGHQIRSYVLFPYQQVKDNRSGEAFSQVDNILDGDIKKMIEGVLISLKAE.

Q251 is modified (N5-methylglutamine).

The protein belongs to the prokaryotic/mitochondrial release factor family. In terms of processing, methylated by PrmC. Methylation increases the termination efficiency of RF2.

It localises to the cytoplasm. Functionally, peptide chain release factor 2 directs the termination of translation in response to the peptide chain termination codons UGA and UAA. The chain is Peptide chain release factor 2 from Campylobacter jejuni (strain RM1221).